An 87-amino-acid chain; its full sequence is Small ribosomal subunit protein uS15c (87 aa).

Belongs to the universal ribosomal protein uS15 family. As to quaternary structure, part of the 30S ribosomal subunit.

It localises to the plastid. The protein resides in the chloroplast. This chain is Small ribosomal subunit protein uS15c (rps15), found in Oenothera glazioviana (Large-flowered evening primrose).